We begin with the raw amino-acid sequence, 380 residues long: Glucose-1-phosphate adenylyltransferase (380 aa).

Residues Gly-164, 179 to 180 (EK), and Ser-190 contribute to the alpha-D-glucose 1-phosphate site.

It belongs to the bacterial/plant glucose-1-phosphate adenylyltransferase family. As to quaternary structure, homotetramer.

The catalysed reaction is alpha-D-glucose 1-phosphate + ATP + H(+) = ADP-alpha-D-glucose + diphosphate. Its pathway is glycan biosynthesis; glycogen biosynthesis. Involved in the biosynthesis of ADP-glucose, a building block required for the elongation reactions to produce glycogen. Catalyzes the reaction between ATP and alpha-D-glucose 1-phosphate (G1P) to produce pyrophosphate and ADP-Glc. The sequence is that of Glucose-1-phosphate adenylyltransferase from Lactococcus lactis subsp. cremoris (strain MG1363).